Here is a 179-residue protein sequence, read N- to C-terminus: MSRLREQYENEIKDAMIKKFGYKNAMEIPKLDKIVVNMGVGEAKENAKVLEAAVKDMEAITGQKAVTTKAKNAIANFKIREGMPIGCKVTLRGEKMYEFADRLINLALPRVRDFRGVNPNAFDGRGNYALGIKEQIIFPEIEYDKVDKVRGMDIIFVTTAKTDEEARELLAQFNMPFAK.

The protein belongs to the universal ribosomal protein uL5 family. In terms of assembly, part of the 50S ribosomal subunit; part of the 5S rRNA/L5/L18/L25 subcomplex. Contacts the 5S rRNA and the P site tRNA. Forms a bridge to the 30S subunit in the 70S ribosome.

This is one of the proteins that bind and probably mediate the attachment of the 5S RNA into the large ribosomal subunit, where it forms part of the central protuberance. In the 70S ribosome it contacts protein S13 of the 30S subunit (bridge B1b), connecting the 2 subunits; this bridge is implicated in subunit movement. Contacts the P site tRNA; the 5S rRNA and some of its associated proteins might help stabilize positioning of ribosome-bound tRNAs. The sequence is that of Large ribosomal subunit protein uL5 from Agathobacter rectalis (strain ATCC 33656 / DSM 3377 / JCM 17463 / KCTC 5835 / VPI 0990) (Eubacterium rectale).